Reading from the N-terminus, the 93-residue chain is GWPAYPGSNGIRSSVCQKKLGCGSKNLASLGVCKAFCLGRKRFWQKCGKNGSSGKGSRISNPVLAHAVEKASKGLIKVTDMAVAAIVKYAGKK.

Cystine bridges form between Cys-16–Cys-37 and Cys-22–Cys-33.

Belongs to the worm cytolysin family. As to expression, localized within the skin and proboscis and are most readily isolated from body mucus secretions.

Its subcellular location is the secreted. Its function is as follows. Cytolysin that shows hemolytic activity (on bovine erythrocytes, HC(50)=5.75 mg/ml). This hemolytic activity is completely inhibited by small unilamelar vesicles composed of PC/PG, PC/PI and PC/PS in 1:1 molar ratios (with at least 100 mg/ml concentration). This Parborlasia corrugatus (Antarctic nemertean worm) protein is Parbolysin P2.